Reading from the N-terminus, the 537-residue chain is MIVEIYNFNFIRINEKEIKLFYNTYPPLKKLECYLDFIKELVSNSYKNNKFIKKDEFEHLVYNTFLYFLINWDNLYHTNQMPFYIWYNFKERVDDILKSEKDITFILNQKYVNIDYFGKYLKKFTNNIKSKNKNRIVDYIMENFQGNLIMLYFLVRKIIMNKNNNYRFDILFITDYDRYYGNNRFFGNHLFKNEEFKKLLKNFDINLTDKNYSILFTKYNFINLPKYIKDYYKKRQDYLFIEDILNLKLGFDILLNSSKIFKKVNLTNYNDEHEKFIHTMFNIFLKHKLPFVLWFYLSIKDYISKTNIKCIVGDSERNFMFYLCNIYRLWRKNIKTIAFSHEVINNNYIHLPISEKYSCIPDCKLVWNENIKKLLIDKYNFPKDKVIVFPDPRFLYWKKYPKKEKTILFVSQGYPEFYEEIFNTFRDKKLINTLIEHGYSFYFKPHPGEYLNDFSIRELEKLKNIKEIKIINGLNFVPEYTIGMSSTMIYELLNAGSKSFFLESNAKETFMMDDKEFKKYFRKNLKEIFFEILNKQL.

This is an uncharacterized protein from Methanocaldococcus jannaschii (strain ATCC 43067 / DSM 2661 / JAL-1 / JCM 10045 / NBRC 100440) (Methanococcus jannaschii).